The primary structure comprises 187 residues: Large ribosomal subunit protein eL18y (187 aa).

The segment at 151-187 (FGPAPGVPHSHSKPYVRAKGRKFEKARGKRKSRGFKV) is disordered. 2 stretches are compositionally biased toward basic residues: residues 160–170 (SHSKPYVRAKG) and 177–187 (RGKRKSRGFKV).

It belongs to the eukaryotic ribosomal protein eL18 family. As to quaternary structure, interacts with NIK1. Interacts directly with EXA1. In terms of tissue distribution, ubiquitous.

It is found in the cytoplasm. The chain is Large ribosomal subunit protein eL18y (RPL18B) from Arabidopsis thaliana (Mouse-ear cress).